A 259-amino-acid polypeptide reads, in one-letter code: MTLLEKTRKINAMLQNAAGKTVNFKEMADTLTDVIEANTYIVSRKGKLLGYSEALPIENDRMKQMLTERQFPEEYTQSLFNVGETSSNLEVSSQYTAFPIENSELFTKGLTTIVPIVGGGERLGTLILSRLESNFTDDDLLLAEYGGTVVGMEILHEKAEEIEEEARSRAVVQMAISSLSYSELEAIEHIFDELNGKEGLLVASKIADRVGITRSVIVNALRKLESAGVIDSRSLGMKGTFIRVLNDKFLVELEKLKNN.

Positions 1 to 155 are GAF domain; that stretch reads MTLLEKTRKI…GGTVVGMEIL (155 aa). Positions 203-222 form a DNA-binding region, H-T-H motif; sequence ASKIADRVGITRSVIVNALR.

The protein belongs to the CodY family.

It localises to the cytoplasm. In terms of biological role, DNA-binding global transcriptional regulator which is involved in the adaptive response to starvation and acts by directly or indirectly controlling the expression of numerous genes in response to nutrient availability. During rapid exponential growth, CodY is highly active and represses genes whose products allow adaptation to nutrient depletion. This chain is Global transcriptional regulator CodY, found in Listeria monocytogenes serotype 4b (strain CLIP80459).